The following is a 607-amino-acid chain: UvrABC system protein C (607 aa).

The GIY-YIG domain occupies Gly-16 to Ile-94. The region spanning Asn-203 to Val-238 is the UVR domain.

Belongs to the UvrC family. Interacts with UvrB in an incision complex.

It is found in the cytoplasm. Its function is as follows. The UvrABC repair system catalyzes the recognition and processing of DNA lesions. UvrC both incises the 5' and 3' sides of the lesion. The N-terminal half is responsible for the 3' incision and the C-terminal half is responsible for the 5' incision. This Pseudomonas syringae pv. syringae (strain B728a) protein is UvrABC system protein C.